Reading from the N-terminus, the 185-residue chain is Ribosome-recycling factor (185 aa).

This sequence belongs to the RRF family.

The protein resides in the cytoplasm. Its function is as follows. Responsible for the release of ribosomes from messenger RNA at the termination of protein biosynthesis. May increase the efficiency of translation by recycling ribosomes from one round of translation to another. In Rhodospirillum centenum (strain ATCC 51521 / SW), this protein is Ribosome-recycling factor.